The sequence spans 391 residues: Glycerophosphocholine acyltransferase 1 (391 aa).

At Met-1–Ser-66 the chain is on the cytoplasmic side. A helical membrane pass occupies residues Phe-67–Leu-87. Residues Gly-88–Gln-92 are Lumenal-facing. The helical transmembrane segment at Asp-93–Tyr-113 threads the bilayer. The Cytoplasmic portion of the chain corresponds to Arg-114–His-119. The chain crosses the membrane as a helical span at residues Tyr-120 to Tyr-140. At Pro-141–Glu-144 the chain is on the lumenal side. A helical transmembrane segment spans residues Lys-145 to Trp-165. Over Arg-166–Ser-172 the chain is Cytoplasmic. Residues Ser-173–Ile-193 traverse the membrane as a helical segment. The Lumenal portion of the chain corresponds to Arg-194–Thr-226. The helical transmembrane segment at Trp-227 to Val-247 threads the bilayer. Residues Asn-248–Met-294 are Cytoplasmic-facing. Residues Tyr-295–Leu-315 form a helical membrane-spanning segment. Topologically, residues Ser-316–Glu-318 are lumenal. Residues Leu-319–Leu-339 form a helical membrane-spanning segment. Over Leu-340–Gln-391 the chain is Cytoplasmic. The tract at residues Lys-354–Gln-391 is disordered. Over residues Ile-380–Gln-391 the composition is skewed to basic and acidic residues.

Belongs to the GPC1 family.

The protein localises to the membrane. The enzyme catalyses sn-glycerol 3-phosphocholine + an acyl-CoA = a monoacyl-sn-glycero-3-phosphocholine + CoA. It carries out the reaction sn-glycero-3-phosphoethanolamine + an acyl-CoA = a monoacyl-sn-glycero-3-phosphoethanolamine + CoA. The catalysed reaction is sn-glycerol 3-phosphocholine + hexadecanoyl-CoA = hexadecanoyl-sn-glycero-3-phosphocholine + CoA. It catalyses the reaction (9Z)-hexadecenoyl-CoA + sn-glycerol 3-phosphocholine = (9Z-hexadecenoyl)-sn-glycero-3-phosphocholine + CoA. The enzyme catalyses (9Z,12Z)-octadecadienoyl-CoA + sn-glycerol 3-phosphocholine = (9Z,12Z-octadecadienoyl)-sn-glycero-3-phosphocholine + CoA. It carries out the reaction (12R)-hydroxy-(9Z)-octadecenoyl-CoA + sn-glycerol 3-phosphocholine = (12R-hydroxy-9Z-octadecenoyl)-sn-glycero-3-phosphocholine + CoA. The catalysed reaction is (9Z,12Z,15Z)-octadecatrienoyl-CoA + sn-glycerol 3-phosphocholine = (9Z,12Z,15Z-octadecatrienoyl)-sn-glycero-3-phosphocholine + CoA. It catalyses the reaction sn-glycerol 3-phosphocholine + (9Z)-octadecenoyl-CoA = (9Z-octadecenoyl)-sn-glycero-3-phosphocholine + CoA. Glycerophosphocholine acyltransferase (GPCAT) that utilizes acyl-CoA to acylate glycero-3-phosphocholine (GPC), forming lysophosphatidylcholine (LPC). Shows broad acyl specificities with a preference for 16:0-CoA, polyunsaturated acyl-CoA, and the hydroxylated ricinoleoyl-CoA. Also catalyzes the acylation of glycero-3-phosphoethanolamine (GPE) with acyl-CoA. In addition to acyl-CoA, GPCAT efficiently utilizes LPC and lysophosphatidylethanolamine (LPE) as acyl donors in the acylation of GPC. Contributes to the maintenance of phosphatidylcholine (PC) homeostasis and might also have specific functions in acyl editing of PC, such as transferring acyl groups modified at the sn-2 position of PC to the sn-1. The protein is Glycerophosphocholine acyltransferase 1 of Ricinus communis (Castor bean).